The primary structure comprises 231 residues: Claudin-10 (231 aa).

Residues 1–21 (MASTALEIVAFVVSISGWVLV) traverse the membrane as a helical segment. The Extracellular segment spans residues 22–80 (SSTLPTDYWKVSTIDGTVITTATYFANLWKICVTDSTGVANCKEFPSMLALDGYIQACR). A helical membrane pass occupies residues 81–101 (GLMIAAVSLGFFGSIFALFGM). Residues 102–115 (KCTKVGGSDQAKAK) are Cytoplasmic-facing. A helical membrane pass occupies residues 116 to 136 (IACLAGIVFILSGLCSMTGCS). Over 137–160 (LYANKITTEFFDPLYMEQKYELGA) the chain is Extracellular. The helical transmembrane segment at 161–181 (ALFIGWAGASLCIIGGVIFCF) threads the bilayer. Residues 182–231 (SISDNNKTPRMGYTYNGPTSAMSSRTKYQGGEGDFKTTGPSKQFDKNAYV) are Cytoplasmic-facing.

This sequence belongs to the claudin family. As to quaternary structure, can form homodimers both in trans (interaction between CLDN10 molecules in opposing membranes) and in cis (interaction between CLDN10 molecules within one membrane). Interacts with CLDN19. Widely expressed, with highest expression detected in brain cortex, kidney and lung. In kidney, the expression is highest in medulla, with transcripts being detected in medullary thick ascending limb of Henle's loop (mTAL) and outer and inner medullary collecting ducts. Expressed in salivary glands and skin. As to expression, detected in kidney with transcripts being detected in PCT, mTAL and cortical collecting duct. Detected in uterus. Expressed in proximal tubules (at protein level). In terms of tissue distribution, only detected in kidney and uterus. Detected in kidney with transcripts being detected in PCT, mTAL and cortical collecting duct. Detected in uterus. As to expression, expressed in the inner ear where it is detected in organ of Corti, marginal cells of stria vascularis, Reissner's membrane and spiral limbus (at protein level).

It is found in the cell junction. It localises to the tight junction. The protein resides in the cell membrane. The protein localises to the endoplasmic reticulum. The enzyme catalyses Na(+)(in) = Na(+)(out). It catalyses the reaction Li(+)(in) = Li(+)(out). It carries out the reaction K(+)(in) = K(+)(out). The catalysed reaction is Rb(+)(in) = Rb(+)(out). The enzyme catalyses Cs(+)(in) = Cs(+)(out). It catalyses the reaction NH4(+)(in) = NH4(+)(out). It carries out the reaction methylamine(out) = methylamine(in). The catalysed reaction is Mg(2+)(in) = Mg(2+)(out). The enzyme catalyses Ca(2+)(in) = Ca(2+)(out). It catalyses the reaction Sr(2+)(in) = Sr(2+)(out). It carries out the reaction chloride(in) = chloride(out). The catalysed reaction is nitrate(in) = nitrate(out). Functionally, forms paracellular channels: polymerizes in tight junction strands with cation- and anion-selective channels through the strands, conveying epithelial permeability in a process known as paracellular tight junction permeability. Forms cation-selective paracellular channels. In sweat glands and in the thick ascending limb (TAL) of Henle's loop in kidney, it controls paracellular sodium permeability which is essential for proper sweat production and renal function. In terms of biological role, forms anion-selective paracellular channels. In renal proximal tubules, it conveys selective chloride over hydrogencarbonate anion permeability which is required for renal chloride reabsorption and salt homeostasis. The protein is Claudin-10 of Mus musculus (Mouse).